The following is a 213-amino-acid chain: ATP synthase peripheral stalk subunit OSCP, mitochondrial (213 aa).

The N-terminal 23 residues, 1–23, are a transit peptide targeting the mitochondrion; that stretch reads MAAPAVSGLSRQVRCFSTSVVRP. The short motif at 5–23 is the SIFI-degron element; the sequence is AVSGLSRQVRCFSTSVVRP. Residues Lys-54, Lys-60, Lys-70, and Lys-73 each carry the N6-acetyllysine modification. At Lys-90 the chain carries N6-succinyllysine. 2 positions are modified to N6-acetyllysine; alternate: Lys-158 and Lys-162. N6-succinyllysine; alternate occurs at positions 158 and 162. An N6-acetyllysine mark is found at Lys-172, Lys-176, and Lys-192. The residue at position 199 (Lys-199) is an N6-succinyllysine.

The protein belongs to the ATPase delta chain family. In terms of assembly, component of the ATP synthase complex composed at least of ATP5F1A/subunit alpha, ATP5F1B/subunit beta, ATP5MC1/subunit c (homooctomer), MT-ATP6/subunit a, MT-ATP8/subunit 8, ATP5ME/subunit e, ATP5MF/subunit f, ATP5MG/subunit g, ATP5MK/subunit k, ATP5MJ/subunit j, ATP5F1C/subunit gamma, ATP5F1D/subunit delta, ATP5F1E/subunit epsilon, ATP5PF/subunit F6, ATP5PB/subunit b, ATP5PD/subunit d, ATP5PO/subunit OSCP. ATP synthase complex consists of a soluble F(1) head domain (subunits alpha(3) and beta(3)) - the catalytic core - and a membrane F(0) domain - the membrane proton channel (subunits c, a, 8, e, f, g, k and j). These two domains are linked by a central stalk (subunits gamma, delta, and epsilon) rotating inside the F1 region and a stationary peripheral stalk (subunits F6, b, d, and OSCP). Post-translationally, acetylation at Lys-162 decreases ATP production. Deacetylated by SIRT3. In terms of processing, in response to mitochondrial stress, the precursor protein is ubiquitinated by the SIFI complex in the cytoplasm before mitochondrial import, leading to its degradation. Within the SIFI complex, UBR4 initiates ubiquitin chain that are further elongated or branched by KCMF1.

The protein localises to the mitochondrion. It localises to the mitochondrion inner membrane. Subunit OSCP, of the mitochondrial membrane ATP synthase complex (F(1)F(0) ATP synthase or Complex V) that produces ATP from ADP in the presence of a proton gradient across the membrane which is generated by electron transport complexes of the respiratory chain. ATP synthase complex consist of a soluble F(1) head domain - the catalytic core - and a membrane F(1) domain - the membrane proton channel. These two domains are linked by a central stalk rotating inside the F(1) region and a stationary peripheral stalk. During catalysis, ATP synthesis in the catalytic domain of F(1) is coupled via a rotary mechanism of the central stalk subunits to proton translocation. In vivo, can only synthesize ATP although its ATP hydrolase activity can be activated artificially in vitro. Part of the complex F(0) domain. Part of the complex F(0) domain and the peripheric stalk, which acts as a stator to hold the catalytic alpha(3)beta(3) subcomplex and subunit a/ATP6 static relative to the rotary elements. In Homo sapiens (Human), this protein is ATP synthase peripheral stalk subunit OSCP, mitochondrial.